A 454-amino-acid polypeptide reads, in one-letter code: tRNA modification GTPase MnmE (454 aa).

(6S)-5-formyl-5,6,7,8-tetrahydrofolate is bound by residues Arg-23, Glu-80, and Lys-120. A TrmE-type G domain is found at 216-377 (GMKVVIAGRP…LREHLKQSMG (162 aa)). Asn-226 is a K(+) binding site. GTP-binding positions include 226-231 (NAGKSS), 245-251 (TDIAGTT), and 270-273 (DTAG). Ser-230 lines the Mg(2+) pocket. Residues Thr-245, Ile-247, and Thr-250 each contribute to the K(+) site. Thr-251 is a binding site for Mg(2+). Lys-454 is a (6S)-5-formyl-5,6,7,8-tetrahydrofolate binding site.

Belongs to the TRAFAC class TrmE-Era-EngA-EngB-Septin-like GTPase superfamily. TrmE GTPase family. As to quaternary structure, homodimer. Heterotetramer of two MnmE and two MnmG subunits. Requires K(+) as cofactor.

It localises to the cytoplasm. Its function is as follows. Exhibits a very high intrinsic GTPase hydrolysis rate. Involved in the addition of a carboxymethylaminomethyl (cmnm) group at the wobble position (U34) of certain tRNAs, forming tRNA-cmnm(5)s(2)U34. The chain is tRNA modification GTPase MnmE from Mannheimia succiniciproducens (strain KCTC 0769BP / MBEL55E).